We begin with the raw amino-acid sequence, 273 residues long: Tyrosinase (273 aa).

Positions 37, 53, 62, 189, 193, and 215 each coordinate Cu cation.

The protein belongs to the tyrosinase family. The cofactor is Cu(2+).

The catalysed reaction is 2 L-dopa + O2 = 2 L-dopaquinone + 2 H2O. It catalyses the reaction L-tyrosine + O2 = L-dopaquinone + H2O. Its function is as follows. This is a copper-containing oxidase that functions in the formation of pigments such as melanins and other polyphenolic compounds. The polypeptide is Tyrosinase (melC2) (Streptomyces lincolnensis).